Here is a 160-residue protein sequence, read N- to C-terminus: Arsenate reductase 2.1 (160 aa).

The Rhodanese domain occupies 42–143; the sequence is SNPRVAIIDV…WELSGQPVCR (102 aa). The active-site Cysteine persulfide intermediate is the Cys-94.

The enzyme catalyses [glutaredoxin]-dithiol + arsenate + glutathione + H(+) = glutathionyl-S-S-[glutaredoxin] + arsenite + H2O. In terms of biological role, possesses arsenate reductase activity in vitro. Catalyzes the reduction of arsenate [As(V)] to arsenite [As(III)]. May play a role in arsenic retention in roots. Possesses phosphatase activity towards p-nitrophenyl phosphate in vitro. This is Arsenate reductase 2.1 (ACR2.1) from Oryza sativa subsp. japonica (Rice).